We begin with the raw amino-acid sequence, 119 residues long: MORF4 family associated protein 1 like 2 (119 aa).

The span at 1–16 (MRPVDADEAREPREEP) shows a compositional bias: basic and acidic residues. Residues 1–36 (MRPVDADEAREPREEPGSPLSPAPRAGRENLASLER) form a disordered region.

Belongs to the MORF4 family-associated protein family. As to quaternary structure, may interact with CDK2AP1.

In terms of biological role, may play a role in cell proliferation. This is MORF4 family associated protein 1 like 2 from Homo sapiens (Human).